Consider the following 249-residue polypeptide: Granaticin polyketide synthase putative ketoacyl reductase 2 (249 aa).

12–36 (LVTGSSSGIGQTVAQRLAAEGYRVV) contacts NAD(+). Serine 144 is a substrate binding site. The active-site Proton acceptor is the tyrosine 157.

It belongs to the short-chain dehydrogenases/reductases (SDR) family.

The protein operates within antibiotic biosynthesis; granaticin biosynthesis. The chain is Granaticin polyketide synthase putative ketoacyl reductase 2 (gra-orf6) from Streptomyces violaceoruber.